We begin with the raw amino-acid sequence, 346 residues long: S-adenosylmethionine:tRNA ribosyltransferase-isomerase (346 aa).

It belongs to the QueA family. As to quaternary structure, monomer.

The protein resides in the cytoplasm. The enzyme catalyses 7-aminomethyl-7-carbaguanosine(34) in tRNA + S-adenosyl-L-methionine = epoxyqueuosine(34) in tRNA + adenine + L-methionine + 2 H(+). It participates in tRNA modification; tRNA-queuosine biosynthesis. In terms of biological role, transfers and isomerizes the ribose moiety from AdoMet to the 7-aminomethyl group of 7-deazaguanine (preQ1-tRNA) to give epoxyqueuosine (oQ-tRNA). The polypeptide is S-adenosylmethionine:tRNA ribosyltransferase-isomerase (Lysinibacillus sphaericus (strain C3-41)).